Consider the following 148-residue polypeptide: Small ribosomal subunit protein eS12B (148 aa).

The protein belongs to the eukaryotic ribosomal protein eS12 family. Component of the small ribosomal subunit (SSU). Mature yeast ribosomes consist of a small (40S) and a large (60S) subunit. The 40S small subunit contains 1 molecule of ribosomal RNA (18S rRNA) and at least 33 different proteins. The large 60S subunit contains 3 rRNA molecules (25S, 5.8S and 5S rRNA) and at least 46 different proteins.

Its subcellular location is the cytoplasm. In terms of biological role, component of the ribosome, a large ribonucleoprotein complex responsible for the synthesis of proteins in the cell. The small ribosomal subunit (SSU) binds messenger RNAs (mRNAs) and translates the encoded message by selecting cognate aminoacyl-transfer RNA (tRNA) molecules. The large subunit (LSU) contains the ribosomal catalytic site termed the peptidyl transferase center (PTC), which catalyzes the formation of peptide bonds, thereby polymerizing the amino acids delivered by tRNAs into a polypeptide chain. The nascent polypeptides leave the ribosome through a tunnel in the LSU and interact with protein factors that function in enzymatic processing, targeting, and the membrane insertion of nascent chains at the exit of the ribosomal tunnel. The chain is Small ribosomal subunit protein eS12B (rps1202) from Schizosaccharomyces pombe (strain 972 / ATCC 24843) (Fission yeast).